The following is a 473-amino-acid chain: Suppressor of SWI4 1 homolog (473 aa).

The Brix domain occupies 29 to 292 (PHSFVFTRGC…LIKVQEGVGE (264 aa)). Ser-238 and Ser-240 each carry phosphoserine. The tract at residues 323–473 (AQRQAQQAQN…GRGRPRKRVA (151 aa)) is disordered. The segment covering 324 to 334 (QRQAQQAQNVQ) has biased composition (low complexity). The span at 335–360 (RKQEQREAHRKKSLEGMKKARVRGGD) shows a compositional bias: basic and acidic residues. Over residues 376–388 (GEDDDEQEDDDIE) the composition is skewed to acidic residues. Residues 407–421 (KRKRLAKSPGQKRKR) show a composition bias toward basic residues. A compositionally biased stretch (basic and acidic residues) spans 422–444 (REMDRGRGRLCDQKFPKPKDKSH). N6-acetyllysine is present on Lys-438. Residues 464-473 (GRGRPRKRVA) show a composition bias toward basic residues.

The protein localises to the nucleus. Its subcellular location is the nucleolus. Functionally, may have a role in cell growth. The polypeptide is Suppressor of SWI4 1 homolog (PPAN) (Pongo abelii (Sumatran orangutan)).